The primary structure comprises 488 residues: Bile acid receptor (488 aa).

Residue K133 forms a Glycyl lysine isopeptide (Lys-Gly) (interchain with G-Cter in SUMO1) linkage. The segment at residues 135 to 210 (DELCVVCGDR…MGMLAECMYT (76 aa)) is a DNA-binding region (nuclear receptor). The NR C4-type zinc finger occupies 138-158 (CVVCGDRASGYHYNALTCEGC). S146 and S165 each carry phosphoserine; by PKC/PRKCA. Position 168 is an N6-acetyllysine; by EP300 (K168). The NR C4-type zinc-finger motif lies at 174–198 (CKNGGNCVMDMYMRRKCQECRLRKC). The residue at position 221 (K221) is an N6-methyllysine; by SETD7. K228 is subject to N6-acetyllysine; by EP300. An NR LBD domain is found at 264–488 (DQQTLLDYIM…PLLCEIWDVQ (225 aa)). Residue K291 forms a Glycyl lysine isopeptide (Lys-Gly) (interchain with G-Cter in SUMO1) linkage. The chenodeoxycholate site is built by R347, Y377, and Y385. T458 carries the phosphothreonine; by PKC/PRKCZ modification. H463 contacts chenodeoxycholate.

Belongs to the nuclear hormone receptor family. NR1 subfamily. As to quaternary structure, heterodimer with RXRA; the heterodimerization enhances the binding affinity for LXXLL motifs from coactivators. Binds DNA predominantly as a heterodimer with RXRA. After activation by agonist binding interacts with coactivators. Interacts with PPARGC1A, SMARCA4 and EP300. Interacts with NCOA1, NCOA2, CARM1, SETD7, PRMT1, GPS2, SMARCA4 and MED1. Interacts with XRCC5 and XRCC6; decreasing NR1H4/FXR transactivation activity towards ABCB11/BSEP. Interacts with PAGR1 and NCOA6; indicative for an association with an MLL2/MLL3 complex (ASCOM). Interacts with NR5A2. Acetylated by EP300. Lys-228 as is the major acetylation site for EP300; the dynamicly regulated acetylation inhibits heterodimerization with RXRA and transactivation activity. Deacetylated by SIRT1. Elevated acetylation levels are found in metabolic disease states (mouse models of obesity and type II diabetes). In terms of processing, methylation may increase transactivation of target genes. Post-translationally, phosphorylation by PKC/PRKCA increases transactivation activity by promoting association with PPARGC1A. Sumoylated upon ligand binding. As to expression, expressed in liver and kidney. Expressed in pancreatic beta cells and macrophages. Expressed in the villus epithelium in adult ileum, with highest expression in the intervillus regions. Expression in colon is reduced by inflammation.

The protein localises to the nucleus. Its function is as follows. Ligand-activated transcription factor. Receptor for bile acids (BAs) such as chenodeoxycholic acid (CDCA), lithocholic acid, deoxycholic acid (DCA) and allocholic acid (ACA). Plays a essential role in BA homeostasis through the regulation of genes involved in BA synthesis, conjugation and enterohepatic circulation. Also regulates lipid and glucose homeostasis and is involved in innate immune response. The FXR-RXR heterodimer binds predominantly to farnesoid X receptor response elements (FXREs) containing two inverted repeats of the consensus sequence 5'-AGGTCA-3' in which the monomers are spaced by 1 nucleotide (IR-1) but also to tandem repeat DR1 sites with lower affinity, and can be activated by either FXR or RXR-specific ligands. It is proposed that monomeric nuclear receptors such as NR5A2/LRH-1 bound to coregulatory nuclear responsive element (NRE) halfsites located in close proximity to FXREs modulate transcriptional activity. In the liver activates transcription of the corepressor NR0B2 thereby indirectly inhibiting CYP7A1 and CYP8B1 (involved in BA synthesis) implicating at least in part histone demethylase KDM1A resulting in epigenomic repression, and SLC10A1/NTCP (involved in hepatic uptake of conjugated BAs). Activates transcription of the repressor MAFG (involved in regulation of BA synthesis). Activates transcription of SLC27A5/BACS and BAAT (involved in BA conjugation), ABCB11/BSEP (involved in bile salt export) by directly recruiting histone methyltransferase CARM1, and ABCC2/MRP2 (involved in secretion of conjugated BAs) and ABCB4 (involved in secretion of phosphatidylcholine in the small intestine). In ileal enterocytes activates FABP6/IBABP (involved in cytosolic transport), SLC51A/OSTA and SLC51B/OSTB (involved in secretion of conjugated BAs to the portal blood), and repressor NR0B2/SHP thereby indirectly inhibiting SLC10A2/ASBT (involved in BA uptake). In the intestine activates FGF15 expression and secretion leading to hepatic CYP7A1 repression; the function also involves the coordinated induction of hepatic KLB/beta-klotho expression. Transcriptional activation of FABP6/IBAP and SCD1 but not of ABCB11 is isoform-specific. Regulates transcription of liver UGT2B4 and SULT2A1 involved in BA detoxification; binding to the UGT2B4 promoter seems to imply a monomeric transactivation independent of RXRA. Modulates lipid homeostasis by activating liver NR0B2/SHP-mediated repression of SREBF1 isoform SREBP-1C (involved in de novo lipogenesis), expression of PLTP (involved in HDL formation), SCARB1 (involved in HDL hepatic uptake), APOE, APOC1, APOC4, VLDLR and SDC1 (involved in the hepatic uptake of LDL and IDL remnants), and inhibiting expression of MTTP (involved in VLDL assembly). Increases expression of APOC2 (promoting lipoprotein lipase activity implicated in triglyceride clearance). Transrepresses APOA1 probably involving a monomeric competition with NR2A1 for binding to a DR1 element. Also reduces triglyceride clearance by inhibiting expression of ANGPTL3 and APOC3 (both involved in inhibition of lipoprotein lipase). Involved in glucose homeostasis by modulating hepatic gluconeogenesis through activation of NR0B2/SHP-mediated repression of respective genes. Modulates glycogen synthesis (inducing phosphorylation of glycogen synthase kinase-3). Modulates glucose-stimulated insulin secretion and is involved in insulin resistance. Involved in intestinal innate immunity. Plays a role in protecting the distal small intestine against bacterial overgrowth and preservation of the epithelial barrier. Down-regulates inflammatory cytokine expression in several types of immune cells including macrophages and mononuclear cells. Mediates transrepression of TLR4-induced cytokine expression; the function seems to require its sumoylation and prevents N-CoR nuclear receptor corepressor clearance from target genes such as IL1B and NOS2. Involved in the TLR9-mediated protective mechanism in intestinal inflammation. Plays a anti-inflammatory role in liver inflammation; proposed to inhibit pro-inflammatory (but not antiapoptotic) NF-kappa-B signaling. Functionally, activates transcription of IBAP and SDC1. This Mus musculus (Mouse) protein is Bile acid receptor (Nr1h4).